The following is a 472-amino-acid chain: ESX-3 secretion system protein EccD3 (472 aa).

11 helical membrane-spanning segments follow: residues 121-141 (WGIA…ALLA), 155-175 (LAGL…GLLI), 183-203 (GIAL…LAVP), 211-231 (VLLG…IPSA), 236-256 (VVAF…AAGA), 258-278 (LLWQ…ALLV), 327-347 (QSGF…AIAV), 349-369 (PEAL…AATL), 381-401 (AWLL…YTAT), 405-425 (VAAF…VVVA), and 450-470 (GLDV…AWVL).

This sequence belongs to the EccD/Snm4 family. In terms of assembly, part of the ESX-3 / type VII secretion system (T7SS), which is composed of cytosolic and membrane components. The ESX-3 membrane complex is composed of EccB3, EccC3, EccD3 and EccE3.

It localises to the cell inner membrane. Functionally, part of the ESX-3 specialized secretion system, which is important for iron and zinc uptake or homeostasis. This chain is ESX-3 secretion system protein EccD3, found in Mycobacterium tuberculosis (strain CDC 1551 / Oshkosh).